Consider the following 68-residue polypeptide: Small ribosomal subunit protein bS21 (68 aa).

The interval 39–68 (PPSVKRVRKKQESERRHRKERAMRRRMMEE) is disordered. The span at 54–68 (RHRKERAMRRRMMEE) shows a compositional bias: basic residues.

Belongs to the bacterial ribosomal protein bS21 family.

This chain is Small ribosomal subunit protein bS21, found in Orientia tsutsugamushi (strain Boryong) (Rickettsia tsutsugamushi).